The primary structure comprises 333 residues: Tryptophan--tRNA ligase (333 aa).

ATP-binding positions include 9–11 and 17–18; these read QPT and GN. The 'HIGH' region signature appears at 10–18; it reads PTNNLTLGN. D140 serves as a coordination point for L-tryptophan. ATP-binding positions include 152 to 154, I191, and 200 to 204; these read GQD and KMSKS. The 'KMSKS' region motif lies at 200 to 204; sequence KMSKS.

It belongs to the class-I aminoacyl-tRNA synthetase family. Homodimer.

It is found in the cytoplasm. It carries out the reaction tRNA(Trp) + L-tryptophan + ATP = L-tryptophyl-tRNA(Trp) + AMP + diphosphate + H(+). Catalyzes the attachment of tryptophan to tRNA(Trp). The sequence is that of Tryptophan--tRNA ligase from Ureaplasma parvum serovar 3 (strain ATCC 700970).